A 141-amino-acid chain; its full sequence is Cystatin-13 (141 aa).

An N-terminal signal peptide occupies residues M1 to A24. Residues Q76–S80 form a secondary area of contact region. Disulfide bonds link C94/C104 and C118/C138.

The protein belongs to the cystatin family. Expressed exclusively in testis. Found in spermatagonia, spermatocytes, round spermatids, elongating spermatids and spermatozoa.

The protein localises to the secreted. It is found in the cytoplasm. Functionally, may perform a specialized role during sperm development and maturation. This is Cystatin-13 from Mus musculus (Mouse).